Consider the following 92-residue polypeptide: MANTTSAKKATRKIARRTDVNKARRSRVRTFVRQVEEAIASGDAAKAKEAFLAAQPELARAASKGVLHANTASRKVSRLAARVKALSVTTTA.

Positions 1–23 (MANTTSAKKATRKIARRTDVNKA) are disordered.

Belongs to the bacterial ribosomal protein bS20 family.

Its function is as follows. Binds directly to 16S ribosomal RNA. This chain is Small ribosomal subunit protein bS20, found in Rhizobium leguminosarum bv. trifolii (strain WSM2304).